The following is a 205-amino-acid chain: MSKESNKAQEPQIEETEAVAVETEVVEDAASLMDELTQANFRVEELEQALAAAEAKVEEQKDSVIRAAAEVENVRRRAAIDVEKAHKFALEKFANELLPVIDNMERALQGTSSEDEATKAIYEGVELTLKTFTSAVAKFGLTQVDPQGEAFNPDHHQAIGMQPSEEFPANTVMMVMQKGYMLNERLLRPAMVMVSQGGASVDTQA.

Belongs to the GrpE family. As to quaternary structure, homodimer.

It localises to the cytoplasm. Participates actively in the response to hyperosmotic and heat shock by preventing the aggregation of stress-denatured proteins, in association with DnaK and GrpE. It is the nucleotide exchange factor for DnaK and may function as a thermosensor. Unfolded proteins bind initially to DnaJ; upon interaction with the DnaJ-bound protein, DnaK hydrolyzes its bound ATP, resulting in the formation of a stable complex. GrpE releases ADP from DnaK; ATP binding to DnaK triggers the release of the substrate protein, thus completing the reaction cycle. Several rounds of ATP-dependent interactions between DnaJ, DnaK and GrpE are required for fully efficient folding. The protein is Protein GrpE of Shewanella loihica (strain ATCC BAA-1088 / PV-4).